We begin with the raw amino-acid sequence, 35 residues long: U1-theraphotoxin-Hhn1a (35 aa).

Intrachain disulfides connect C2–C16, C9–C21, and C15–C28.

This sequence belongs to the neurotoxin 10 (Hwtx-1) family. 24 (Hwtx-6) subfamily. As to expression, expressed by the venom gland.

The protein resides in the secreted. Its function is as follows. Gating-modifier toxin that dose-dependently inhibits inactivation of voltage-gated sodium channels and reduces the peak of sodium current in cockroach DUM neurons. In vivo, reversibly paralyzes cockroaches for several hours, paralyzes rat after intracerebroventricular injection and blocks the neuromuscular transmission of the isolated rat phrenic nerve-diaphragm preparation. The chain is U1-theraphotoxin-Hhn1a from Cyriopagopus hainanus (Chinese bird spider).